The following is a 68-amino-acid chain: Conotoxin PnMLKM-011 (68 aa).

The first 17 residues, 1-17 (MGVVLFIFLVLFPLATL), serve as a signal peptide directing secretion. The propeptide occupies 18 to 51 (QLDPDQPVERYAENKQLLNPDERRGIILHALGQR). 3 cysteine pairs are disulfide-bonded: Cys-53–Cys-65, Cys-54–Cys-63, and Cys-59–Cys-66. Leu-67 carries the post-translational modification Leucine amide.

It belongs to the conotoxin M superfamily. In terms of tissue distribution, expressed by the venom duct.

It is found in the secreted. The chain is Conotoxin PnMLKM-011 from Conus pennaceus (Feathered cone).